The primary structure comprises 174 residues: Membrane protein NfeD2 (174 aa).

3 consecutive transmembrane segments (helical) span residues 16–36, 47–67, and 72–92; these read LIIAGSLTLLFLFFGDVFSGL, LVLSFFTCFSAGGYIGELVLP, and LIALLSCILSIMLVVLLHIFV.

This sequence belongs to the NfeD family.

Its subcellular location is the cell membrane. It is found in the membrane raft. In terms of biological role, plays a role in assembly of FloT membrane rafts, probably recruited to rafts by FloT. The sequence is that of Membrane protein NfeD2 from Bacillus subtilis (strain 168).